The following is a 309-amino-acid chain: Ornithine carbamoyltransferase (309 aa).

Residues 56–59 (STRT), Gln-83, Arg-107, and 134–137 (HPCQ) contribute to the carbamoyl phosphate site. L-ornithine-binding positions include Asn-165, Asp-223, and 227–228 (SM). Carbamoyl phosphate-binding positions include 263–264 (CL) and Arg-291.

It belongs to the aspartate/ornithine carbamoyltransferase superfamily. OTCase family.

It is found in the cytoplasm. It carries out the reaction carbamoyl phosphate + L-ornithine = L-citrulline + phosphate + H(+). The protein operates within amino-acid biosynthesis; L-arginine biosynthesis; L-arginine from L-ornithine and carbamoyl phosphate: step 1/3. Functionally, reversibly catalyzes the transfer of the carbamoyl group from carbamoyl phosphate (CP) to the N(epsilon) atom of ornithine (ORN) to produce L-citrulline. This Burkholderia lata (strain ATCC 17760 / DSM 23089 / LMG 22485 / NCIMB 9086 / R18194 / 383) protein is Ornithine carbamoyltransferase.